Here is a 212-residue protein sequence, read N- to C-terminus: ATP phosphoribosyltransferase (212 aa).

Belongs to the ATP phosphoribosyltransferase family. Short subfamily. In terms of assembly, heteromultimer composed of HisG and HisZ subunits.

The protein localises to the cytoplasm. The enzyme catalyses 1-(5-phospho-beta-D-ribosyl)-ATP + diphosphate = 5-phospho-alpha-D-ribose 1-diphosphate + ATP. Its pathway is amino-acid biosynthesis; L-histidine biosynthesis; L-histidine from 5-phospho-alpha-D-ribose 1-diphosphate: step 1/9. Functionally, catalyzes the condensation of ATP and 5-phosphoribose 1-diphosphate to form N'-(5'-phosphoribosyl)-ATP (PR-ATP). Has a crucial role in the pathway because the rate of histidine biosynthesis seems to be controlled primarily by regulation of HisG enzymatic activity. The chain is ATP phosphoribosyltransferase from Albidiferax ferrireducens (strain ATCC BAA-621 / DSM 15236 / T118) (Rhodoferax ferrireducens).